The chain runs to 121 residues: Small ribosomal subunit protein uS13 (121 aa).

The tract at residues 93–121 (RGLPMRGQRTRTNARTRKGPRKGAAALKK) is disordered.

This sequence belongs to the universal ribosomal protein uS13 family. As to quaternary structure, part of the 30S ribosomal subunit. Forms a loose heterodimer with protein S19. Forms two bridges to the 50S subunit in the 70S ribosome.

Functionally, located at the top of the head of the 30S subunit, it contacts several helices of the 16S rRNA. In the 70S ribosome it contacts the 23S rRNA (bridge B1a) and protein L5 of the 50S subunit (bridge B1b), connecting the 2 subunits; these bridges are implicated in subunit movement. Contacts the tRNAs in the A and P-sites. The sequence is that of Small ribosomal subunit protein uS13 from Paracidovorax citrulli (strain AAC00-1) (Acidovorax citrulli).